Here is a 799-residue protein sequence, read N- to C-terminus: Zinc finger X-linked protein ZXDA (799 aa).

The disordered stretch occupies residues 1–89; it reads MEIPKLLPAR…QPSGGGDDFF (89 aa). Residues 13-26 are compositionally biased toward gly residues; the sequence is LQGGGGGGIPAGGG. 10 C2H2-type zinc fingers span residues 267–291, 300–324, 330–354, 360–382, 389–413, 420–444, 450–474, 480–504, 510–534, and 543–568; these read YLCP…LLTH, FKCP…LQSH, FGCP…MKGH, FKCE…QRSH, YQCA…NRAH, FSCS…LRSH, FLCD…KRKH, FMCP…SITH, FVCP…SKKH, and SRCP…VKRH. Residues 267–573 are required for interaction with ZXDC; the sequence is YLCPEALCGQ…MVKRHKVGQD (307 aa). Residues 572-699 are required for transcriptional activation; the sequence is QDLLAQLEAA…NMDEVSSVSV (128 aa).

Belongs to the ZXD family. As to quaternary structure, self-associates. Interacts with ZXDC and CIITA. May be expressed in brain, heart, kidney, liver, lung, muscle and placenta.

Its subcellular location is the nucleus. Cooperates with CIITA to promote transcription of MHC class I and MHC class II genes. In Homo sapiens (Human), this protein is Zinc finger X-linked protein ZXDA (ZXDA).